The sequence spans 241 residues: Glutathione S-transferase omega-1 (241 aa).

The residue at position 2 (Ser-2) is an N-acetylserine. In terms of domain architecture, GST N-terminal spans 22–101; sequence GQIRVYSMRF…YLDEAYPEKK (80 aa). Cys-32 serves as the catalytic Nucleophile. Position 57 is an N6-acetyllysine (Lys-57). Residues Lys-59, Val-72, and 85-86 each bind glutathione; that span reads ES. One can recognise a GST C-terminal domain in the interval 106–228; sequence DPYEKACQKM…AKTYRDYLSL (123 aa). Ser-129 bears the Phosphoserine mark. N6-acetyllysine occurs at positions 143, 148, and 152.

The protein belongs to the GST superfamily. Omega family. Homodimer.

It localises to the cytoplasm. The protein localises to the cytosol. The catalysed reaction is RX + glutathione = an S-substituted glutathione + a halide anion + H(+). It catalyses the reaction L-dehydroascorbate + 2 glutathione = glutathione disulfide + L-ascorbate. It carries out the reaction methylarsonate + 2 glutathione + H(+) = methylarsonous acid + glutathione disulfide + H2O. Functionally, exhibits glutathione-dependent thiol transferase and dehydroascorbate reductase activities. Has S-(phenacyl)glutathione reductase activity. Also has glutathione S-transferase activity. Participates in the biotransformation of inorganic arsenic and reduces monomethylarsonic acid (MMA) and dimethylarsonic acid. The polypeptide is Glutathione S-transferase omega-1 (Gsto1) (Rattus norvegicus (Rat)).